Reading from the N-terminus, the 345-residue chain is Serpentine receptor class beta-13 (345 aa).

Residues 1-22 lie on the Extracellular side of the membrane; the sequence is MAGINQTKCDLGFQITFNTVYR. The N-linked (GlcNAc...) asparagine glycan is linked to N5. A helical membrane pass occupies residues 23 to 43; the sequence is FSQFYTFSVSSFAVPGLIYFM. The Cytoplasmic portion of the chain corresponds to 44–58; the sequence is FKRLFQLYFHGNLKT. A helical transmembrane segment spans residues 59 to 79; that stretch reads LLIAYFISILLYAVMLCFAFG. The Extracellular segment spans residues 80-103; sequence YQFFVPFFIKSNCDLIINKTLFKY. The N-linked (GlcNAc...) asparagine glycan is linked to N97. Residues 104–124 traverse the membrane as a helical segment; it reads IHTSVIFLLTTPMMFPLGFSI. Over 125–142 the chain is Cytoplasmic; it reads ERFTAMAMASRYENIRTL. Residues 143–163 form a helical membrane-spanning segment; that stretch reads IGPVLVIFLIIPNCIIFYFLF. At 164–189 the chain is on the extracellular side; sequence QHETYDDTFISFLMLPNTTAVNFNTY. An N-linked (GlcNAc...) asparagine glycan is attached at N180. A helical transmembrane segment spans residues 190 to 210; that stretch reads LWFLLYLNIGNLALNVLLLLV. The Cytoplasmic segment spans residues 211 to 241; sequence HRKFKRRLLLHKTSLSTRYAIEEISQSSKFT. The chain crosses the membrane as a helical span at residues 242–262; it reads LIITFTHLLFFGCNTICSILV. Residues 263-280 lie on the Extracellular side of the membrane; sequence RVLGEPFFGSFINHSVAR. Residue N275 is glycosylated (N-linked (GlcNAc...) asparagine). The helical transmembrane segment at 281–301 threads the bilayer; that stretch reads GVNCAVPTYNLVIVVVGFVSL. Over 302–345 the chain is Cytoplasmic; the sequence is SKLNSRRQQEVQTTVQLKTTGKEGARNYDNITANQWATITQIGF.

It belongs to the nematode receptor-like protein srb family. As to expression, expressed in the head sensory neurons ASI, ASK and AWB. Not expressed in male somatic gonads or sperm.

It is found in the cell membrane. It localises to the perikaryon. The protein localises to the cell projection. Its subcellular location is the dendrite. Functionally, G-protein coupled receptor that antagonizes the negative effects of the gcy-35 oxygen sensor on spermatogenesis. This leads to the maintenance of mitochondrial function in developing spermatocytes and/or spermatids prior to testis maturation during the early larval stages. Regulates the navigational capacity of sperm during hyperoxic conditions ensuring the proper targeting of sperm derived from males to the fertilization site in the uterus of hermaphrodites. May act in the same signaling pathway as the neuropeptide flp-21. The chain is Serpentine receptor class beta-13 from Caenorhabditis elegans.